The chain runs to 170 residues: Co-chaperone protein HscB homolog (170 aa).

One can recognise a J domain in the interval 5–79; sequence DHFSLFGLPT…RARYLCEQAG (75 aa).

This sequence belongs to the HscB family. In terms of assembly, interacts with HscA and stimulates its ATPase activity.

In terms of biological role, co-chaperone involved in the maturation of iron-sulfur cluster-containing proteins. Seems to help targeting proteins to be folded toward HscA. The sequence is that of Co-chaperone protein HscB homolog from Bordetella bronchiseptica (strain ATCC BAA-588 / NCTC 13252 / RB50) (Alcaligenes bronchisepticus).